The primary structure comprises 317 residues: MVLTQLRIASRRSQLAMVQTNWVQAELEQAHPGLSISVEAMATQGDKILDVALAKIGDKGLFTKELEAQMLIGRADIAVHSLKDLPTNLPEGLMLGCVTEREDPADALVVNQKNAEHQLDTLPEGAIVGTSSLRRLAQLRHHYPHLVFKDVRGNVITRLEKLDAGNYDCLILAAAGLTRLGFGDRIHQLIPSEISLHAVGQGALGIECVEGHPEVLEVIKALEHKPTAQRCLAERALLRELEGGCQVPIGVNSRIEANELLLTGMVASLDGKRLIRDQQRGPIDRCEAIGKELAETLKSQGAGEILAEIFAAVRPEA.

Position 245 is an S-(dipyrrolylmethanemethyl)cysteine (Cys-245).

The protein belongs to the HMBS family. As to quaternary structure, monomer. Dipyrromethane serves as cofactor.

The catalysed reaction is 4 porphobilinogen + H2O = hydroxymethylbilane + 4 NH4(+). The protein operates within porphyrin-containing compound metabolism; protoporphyrin-IX biosynthesis; coproporphyrinogen-III from 5-aminolevulinate: step 2/4. Its pathway is porphyrin-containing compound metabolism; chlorophyll biosynthesis. Tetrapolymerization of the monopyrrole PBG into the hydroxymethylbilane pre-uroporphyrinogen in several discrete steps. This is Porphobilinogen deaminase from Prochlorococcus marinus (strain MIT 9303).